We begin with the raw amino-acid sequence, 354 residues long: Ferrochelatase (354 aa).

2 residues coordinate Fe cation: H214 and E295.

Belongs to the ferrochelatase family.

The protein resides in the cytoplasm. The enzyme catalyses heme b + 2 H(+) = protoporphyrin IX + Fe(2+). Its pathway is porphyrin-containing compound metabolism; protoheme biosynthesis; protoheme from protoporphyrin-IX: step 1/1. In terms of biological role, catalyzes the ferrous insertion into protoporphyrin IX. In Burkholderia lata (strain ATCC 17760 / DSM 23089 / LMG 22485 / NCIMB 9086 / R18194 / 383), this protein is Ferrochelatase.